A 218-amino-acid polypeptide reads, in one-letter code: Elongation factor Ts (218 aa).

Residues Thr-82–Val-85 are involved in Mg(2+) ion dislocation from EF-Tu.

The protein belongs to the EF-Ts family.

It localises to the cytoplasm. Functionally, associates with the EF-Tu.GDP complex and induces the exchange of GDP to GTP. It remains bound to the aminoacyl-tRNA.EF-Tu.GTP complex up to the GTP hydrolysis stage on the ribosome. The chain is Elongation factor Ts from Prochlorococcus marinus (strain NATL2A).